A 572-amino-acid chain; its full sequence is Proline--tRNA ligase (572 aa).

This sequence belongs to the class-II aminoacyl-tRNA synthetase family. ProS type 1 subfamily. As to quaternary structure, homodimer.

It localises to the cytoplasm. The enzyme catalyses tRNA(Pro) + L-proline + ATP = L-prolyl-tRNA(Pro) + AMP + diphosphate. Its function is as follows. Catalyzes the attachment of proline to tRNA(Pro) in a two-step reaction: proline is first activated by ATP to form Pro-AMP and then transferred to the acceptor end of tRNA(Pro). As ProRS can inadvertently accommodate and process non-cognate amino acids such as alanine and cysteine, to avoid such errors it has two additional distinct editing activities against alanine. One activity is designated as 'pretransfer' editing and involves the tRNA(Pro)-independent hydrolysis of activated Ala-AMP. The other activity is designated 'posttransfer' editing and involves deacylation of mischarged Ala-tRNA(Pro). The misacylated Cys-tRNA(Pro) is not edited by ProRS. This chain is Proline--tRNA ligase, found in Caldicellulosiruptor bescii (strain ATCC BAA-1888 / DSM 6725 / KCTC 15123 / Z-1320) (Anaerocellum thermophilum).